Here is a 41-residue protein sequence, read N- to C-terminus: Photosystem II reaction center protein L (41 aa).

A helical membrane pass occupies residues 20-40 (LFLGLLLVFVLGILSPATSLT).

It belongs to the PsbL family. PSII is composed of 1 copy each of membrane proteins PsbA, PsbB, PsbC, PsbD, PsbE, PsbF, PsbH, PsbI, PsbJ, PsbK, PsbL, PsbM, PsbT, PsbX, PsbY, PsbZ, Psb30/Ycf12, peripheral proteins PsbO, CyanoQ (PsbQ), PsbU, PsbV and a large number of cofactors. It forms dimeric complexes.

The protein localises to the cellular thylakoid membrane. Its function is as follows. One of the components of the core complex of photosystem II (PSII). PSII is a light-driven water:plastoquinone oxidoreductase that uses light energy to abstract electrons from H(2)O, generating O(2) and a proton gradient subsequently used for ATP formation. It consists of a core antenna complex that captures photons, and an electron transfer chain that converts photonic excitation into a charge separation. This subunit is found at the monomer-monomer interface and is required for correct PSII assembly and/or dimerization. This Synechococcus sp. (strain ATCC 27144 / PCC 6301 / SAUG 1402/1) (Anacystis nidulans) protein is Photosystem II reaction center protein L.